Here is a 615-residue protein sequence, read N- to C-terminus: Ankyrin repeat and LEM domain-containing protein 1 (615 aa).

ANK repeat units lie at residues 39-71, 75-104, and 108-137; these read DGAAAVHLAAGARHPRGLRCLGALLRQGGDPNA, EALTPLHVAAAWGCRRGLELLLSQGADPAL, and DGLRPLDLALQQGHLECARVLQDLDTRTRT. The segment at 138 to 210 is disordered; the sequence is RTRIGAETQE…DKHGSSASPP (73 aa). The short motif at 271 to 280 is the Nuclear export signal element; that stretch reads LNARLQALTL. The span at 283-294 shows a compositional bias: polar residues; that stretch reads PNAAGFQSSPSS. The segment at 283-315 is disordered; sequence PNAAGFQSSPSSMPLLDRSPAHSPPRTPTPGAS. The 45-residue stretch at 355–399 folds into the LEM domain; the sequence is HLPVSTVSDLELLKGLRALGENPHPITPFTRQLYHQQLEEAQIAP. The GIY-YIG domain occupies 448-566; sequence KSSFTYLLLD…ALGIQTLTNQ (119 aa). The Nuclear localization signal signature appears at 579–586; it reads PPARRRRL.

In terms of assembly, interacts (via LEM domain) with BANF1; the interaction may favor BANF1 dimerization. As to expression, expression is predominant in adult bone marrow.

Its subcellular location is the cytoplasm. The protein resides in the nucleus. Functionally, endonuclease that probably plays a role in the DNA damage response and DNA repair. This Homo sapiens (Human) protein is Ankyrin repeat and LEM domain-containing protein 1 (ANKLE1).